The chain runs to 184 residues: Small ribosomal subunit protein uS4c (184 aa).

The 62-residue stretch at 82–143 (MRLDNILFRL…KQRSKALIQN (62 aa)) folds into the S4 RNA-binding domain.

This sequence belongs to the universal ribosomal protein uS4 family. As to quaternary structure, part of the 30S ribosomal subunit. Contacts protein S5. The interaction surface between S4 and S5 is involved in control of translational fidelity.

It localises to the plastid. It is found in the chloroplast. One of the primary rRNA binding proteins, it binds directly to 16S rRNA where it nucleates assembly of the body of the 30S subunit. Functionally, with S5 and S12 plays an important role in translational accuracy. In Patersonia fragilis (Short purple-flag), this protein is Small ribosomal subunit protein uS4c (rps4).